Here is a 132-residue protein sequence, read N- to C-terminus: ATP synthase epsilon chain (132 aa).

The protein belongs to the ATPase epsilon chain family. As to quaternary structure, F-type ATPases have 2 components, CF(1) - the catalytic core - and CF(0) - the membrane proton channel. CF(1) has five subunits: alpha(3), beta(3), gamma(1), delta(1), epsilon(1). CF(0) has three main subunits: a, b and c.

It localises to the cell inner membrane. Produces ATP from ADP in the presence of a proton gradient across the membrane. The chain is ATP synthase epsilon chain from Anaeromyxobacter sp. (strain Fw109-5).